Reading from the N-terminus, the 316-residue chain is 4-hydroxy-3-methylbut-2-enyl diphosphate reductase (316 aa).

Residue cysteine 12 coordinates [4Fe-4S] cluster. (2E)-4-hydroxy-3-methylbut-2-enyl diphosphate-binding residues include histidine 41 and histidine 74. Residues histidine 41 and histidine 74 each coordinate dimethylallyl diphosphate. Histidine 41 and histidine 74 together coordinate isopentenyl diphosphate. Cysteine 96 is a binding site for [4Fe-4S] cluster. Histidine 124 contacts (2E)-4-hydroxy-3-methylbut-2-enyl diphosphate. A dimethylallyl diphosphate-binding site is contributed by histidine 124. Histidine 124 lines the isopentenyl diphosphate pocket. Catalysis depends on glutamate 126, which acts as the Proton donor. A (2E)-4-hydroxy-3-methylbut-2-enyl diphosphate-binding site is contributed by threonine 169. Cysteine 199 contributes to the [4Fe-4S] cluster binding site. The (2E)-4-hydroxy-3-methylbut-2-enyl diphosphate site is built by serine 227, serine 228, asparagine 229, and serine 271. Dimethylallyl diphosphate is bound by residues serine 227, serine 228, asparagine 229, and serine 271. Isopentenyl diphosphate is bound by residues serine 227, serine 228, asparagine 229, and serine 271.

It belongs to the IspH family. The cofactor is [4Fe-4S] cluster.

It catalyses the reaction isopentenyl diphosphate + 2 oxidized [2Fe-2S]-[ferredoxin] + H2O = (2E)-4-hydroxy-3-methylbut-2-enyl diphosphate + 2 reduced [2Fe-2S]-[ferredoxin] + 2 H(+). It carries out the reaction dimethylallyl diphosphate + 2 oxidized [2Fe-2S]-[ferredoxin] + H2O = (2E)-4-hydroxy-3-methylbut-2-enyl diphosphate + 2 reduced [2Fe-2S]-[ferredoxin] + 2 H(+). It participates in isoprenoid biosynthesis; dimethylallyl diphosphate biosynthesis; dimethylallyl diphosphate from (2E)-4-hydroxy-3-methylbutenyl diphosphate: step 1/1. Its pathway is isoprenoid biosynthesis; isopentenyl diphosphate biosynthesis via DXP pathway; isopentenyl diphosphate from 1-deoxy-D-xylulose 5-phosphate: step 6/6. Its function is as follows. Catalyzes the conversion of 1-hydroxy-2-methyl-2-(E)-butenyl 4-diphosphate (HMBPP) into a mixture of isopentenyl diphosphate (IPP) and dimethylallyl diphosphate (DMAPP). Acts in the terminal step of the DOXP/MEP pathway for isoprenoid precursor biosynthesis. The chain is 4-hydroxy-3-methylbut-2-enyl diphosphate reductase from Xanthomonas campestris pv. campestris (strain ATCC 33913 / DSM 3586 / NCPPB 528 / LMG 568 / P 25).